We begin with the raw amino-acid sequence, 170 residues long: ATP synthase subunit b (170 aa).

The helical transmembrane segment at 20–42 (QLLAMLVLLALLKKFALGPLLNI) threads the bilayer.

This sequence belongs to the ATPase B chain family. As to quaternary structure, F-type ATPases have 2 components, F(1) - the catalytic core - and F(0) - the membrane proton channel. F(1) has five subunits: alpha(3), beta(3), gamma(1), delta(1), epsilon(1). F(0) has three main subunits: a(1), b(2) and c(10-14). The alpha and beta chains form an alternating ring which encloses part of the gamma chain. F(1) is attached to F(0) by a central stalk formed by the gamma and epsilon chains, while a peripheral stalk is formed by the delta and b chains.

It is found in the cell membrane. Functionally, f(1)F(0) ATP synthase produces ATP from ADP in the presence of a proton or sodium gradient. F-type ATPases consist of two structural domains, F(1) containing the extramembraneous catalytic core and F(0) containing the membrane proton channel, linked together by a central stalk and a peripheral stalk. During catalysis, ATP synthesis in the catalytic domain of F(1) is coupled via a rotary mechanism of the central stalk subunits to proton translocation. Component of the F(0) channel, it forms part of the peripheral stalk, linking F(1) to F(0). In Bacillus velezensis (strain DSM 23117 / BGSC 10A6 / LMG 26770 / FZB42) (Bacillus amyloliquefaciens subsp. plantarum), this protein is ATP synthase subunit b.